Here is a 1411-residue protein sequence, read N- to C-terminus: Protein three rows (1411 aa).

The tract at residues 1065 to 1071 (VEPIRKQ) is separase cleavage-site. 3 disordered regions span residues 1221 to 1240 (LEPP…NISP), 1268 to 1301 (VRPA…KSPK), and 1330 to 1411 (AKST…RHRN). 2 stretches are compositionally biased toward low complexity: residues 1270 to 1289 (PASS…NASS) and 1386 to 1398 (TAEQ…TATP).

Interacts with pim and Sse. Cleavage of thr contributes to inactivation of Sse.

The protein localises to the cytoplasm. Functionally, required specifically for chromosome disjunction during all mitoses; maternally provided protein is sufficient until mitosis 14 then zygotic protein is required. Involved in formation and/or maintenance of epithelial structures: bud extension during Malpighian tubule development, and foregut and hindgut morphogenesis. The protein is Protein three rows (thr) of Drosophila virilis (Fruit fly).